A 545-amino-acid polypeptide reads, in one-letter code: CTP synthase (545 aa).

Residues 1–266 are amidoligase domain; it reads MTHFIFVTGG…DDLICERFGY (266 aa). Ser13 serves as a coordination point for CTP. UTP is bound at residue Ser13. ATP is bound by residues 14-19 and Asp71; that span reads SLGKGI. Mg(2+) contacts are provided by Asp71 and Glu140. Residues 147–149, 187–192, and Lys223 each bind CTP; these read DIE and KTKPTQ. UTP is bound by residues 187–192 and Lys223; that span reads KTKPTQ. ATP is bound at residue 239-241; that stretch reads KDA. The region spanning 292 to 543 is the Glutamine amidotransferase type-1 domain; that stretch reads RVAMVGKYVE…IDAAKKQHLK (252 aa). Gly353 is a binding site for L-glutamine. Catalysis depends on Cys380, which acts as the Nucleophile; for glutamine hydrolysis. L-glutamine-binding positions include 381–384, Glu404, and Arg471; that span reads LGMQ. Residues His516 and Glu518 contribute to the active site.

It belongs to the CTP synthase family. As to quaternary structure, homotetramer.

The enzyme catalyses UTP + L-glutamine + ATP + H2O = CTP + L-glutamate + ADP + phosphate + 2 H(+). It carries out the reaction L-glutamine + H2O = L-glutamate + NH4(+). The catalysed reaction is UTP + NH4(+) + ATP = CTP + ADP + phosphate + 2 H(+). The protein operates within pyrimidine metabolism; CTP biosynthesis via de novo pathway; CTP from UDP: step 2/2. Allosterically activated by GTP, when glutamine is the substrate; GTP has no effect on the reaction when ammonia is the substrate. The allosteric effector GTP functions by stabilizing the protein conformation that binds the tetrahedral intermediate(s) formed during glutamine hydrolysis. Inhibited by the product CTP, via allosteric rather than competitive inhibition. Catalyzes the ATP-dependent amination of UTP to CTP with either L-glutamine or ammonia as the source of nitrogen. Regulates intracellular CTP levels through interactions with the four ribonucleotide triphosphates. In Acinetobacter baylyi (strain ATCC 33305 / BD413 / ADP1), this protein is CTP synthase.